The sequence spans 101 residues: Urease subunit gamma (101 aa).

This sequence belongs to the urease gamma subunit family. Heterotrimer of UreA (gamma), UreB (beta) and UreC (alpha) subunits. Three heterotrimers associate to form the active enzyme.

The protein resides in the cytoplasm. It catalyses the reaction urea + 2 H2O + H(+) = hydrogencarbonate + 2 NH4(+). It participates in nitrogen metabolism; urea degradation; CO(2) and NH(3) from urea (urease route): step 1/1. The chain is Urease subunit gamma from Ureaplasma parvum serovar 3 (strain ATCC 27815 / 27 / NCTC 11736).